The following is a 76-amino-acid chain: Vasotab (76 aa).

The signal sequence occupies residues 1–20 (MKFALFSVLVVLLIATFVAA). One can recognise a Kazal-like domain in the interval 21–76 (DECPRICTADYRPVCGTPSGGRRSANRTFGNQCSLNAHNCLNKGDTYDKLHDGECK). Cystine bridges form between C23–C60, C27–C53, and C35–C75.

Expressed by the salivary gland.

It is found in the secreted. Its function is as follows. Vasodilator protein that inhibits vasoconstriction of isolated rat femoral artery induced by phenylephrine. Since platelet aggregation and vasoconstriction are key hemostatic responses, particularly in small wounds, this protein likely participates in the antihemostatic responses during blood feeding. Blocks L-type calcium channels (Cav1/CACNA1) in left ventricular myocytes isolated from rat hearts. This is Vasotab from Hybomitra bimaculata (Horse fly).